Consider the following 319-residue polypeptide: ATP-dependent 6-phosphofructokinase (319 aa).

Residues Gly-10, 71–72 (RS), and 101–104 (GDGS) contribute to the ATP site. Residue Asp-102 participates in Mg(2+) binding. 125–127 (TID) contacts substrate. The active-site Proton acceptor is the Asp-127. Arg-154 provides a ligand contact to ADP. Residues Arg-162 and 169–171 (MGR) contribute to the substrate site. 185 to 187 (GAE) serves as a coordination point for ADP. Substrate-binding positions include Glu-223, Arg-244, and 250–253 (HVQR).

It belongs to the phosphofructokinase type A (PFKA) family. ATP-dependent PFK group I subfamily. Prokaryotic clade 'B1' sub-subfamily. As to quaternary structure, homotetramer. It depends on Mg(2+) as a cofactor.

It is found in the cytoplasm. The enzyme catalyses beta-D-fructose 6-phosphate + ATP = beta-D-fructose 1,6-bisphosphate + ADP + H(+). It functions in the pathway carbohydrate degradation; glycolysis; D-glyceraldehyde 3-phosphate and glycerone phosphate from D-glucose: step 3/4. Its activity is regulated as follows. Allosterically activated by ADP and other diphosphonucleosides, and allosterically inhibited by phosphoenolpyruvate. Functionally, catalyzes the phosphorylation of D-fructose 6-phosphate to fructose 1,6-bisphosphate by ATP, the first committing step of glycolysis. The polypeptide is ATP-dependent 6-phosphofructokinase (Wolinella succinogenes (strain ATCC 29543 / DSM 1740 / CCUG 13145 / JCM 31913 / LMG 7466 / NCTC 11488 / FDC 602W) (Vibrio succinogenes)).